The primary structure comprises 88 residues: Apolipoprotein C-I (88 aa).

An N-terminal signal peptide occupies residues 1–26 (MRLILSLPVLVVVLSMVLEGPAPAQA).

Belongs to the apolipoprotein C1 family. In terms of tissue distribution, expressed in the liver.

The protein resides in the secreted. Functionally, inhibitor of lipoprotein binding to the low density lipoprotein (LDL) receptor, LDL receptor-related protein, and very low density lipoprotein (VLDL) receptor. Associates with high density lipoproteins (HDL) and the triacylglycerol-rich lipoproteins in the plasma and makes up about 10% of the protein of the VLDL and 2% of that of HDL. Appears to interfere directly with fatty acid uptake and is also the major plasma inhibitor of cholesteryl ester transfer protein (CETP). Binds free fatty acids and reduces their intracellular esterification. Modulates the interaction of APOE with beta-migrating VLDL and inhibits binding of beta-VLDL to the LDL receptor-related protein. The polypeptide is Apolipoprotein C-I (APOC1) (Canis lupus familiaris (Dog)).